A 300-amino-acid chain; its full sequence is GTPase Era (300 aa).

Residues 5–172 (HSGFVAIIGR…LTALTDALPV (168 aa)) enclose the Era-type G domain. Residues 13-20 (GRPNVGKS) are G1. 13 to 20 (GRPNVGKS) lines the GTP pocket. A G2 region spans residues 39-43 (QTTRN). The G3 stretch occupies residues 60–63 (DTPG). GTP is bound by residues 60–64 (DTPGI) and 122–125 (NKID). The tract at residues 122–125 (NKID) is G4. The interval 151–153 (ISA) is G5. Residues 203 to 280 (TRDEVPHAVA…NLKLWVRVQK (78 aa)) form the KH type-2 domain.

Belongs to the TRAFAC class TrmE-Era-EngA-EngB-Septin-like GTPase superfamily. Era GTPase family. Monomer.

The protein localises to the cytoplasm. It localises to the cell membrane. In terms of biological role, an essential GTPase that binds both GDP and GTP, with rapid nucleotide exchange. Plays a role in 16S rRNA processing and 30S ribosomal subunit biogenesis and possibly also in cell cycle regulation and energy metabolism. In Lacticaseibacillus paracasei (strain ATCC 334 / BCRC 17002 / CCUG 31169 / CIP 107868 / KCTC 3260 / NRRL B-441) (Lactobacillus paracasei), this protein is GTPase Era.